Consider the following 151-residue polypeptide: 3-hydroxyacyl-[acyl-carrier-protein] dehydratase FabZ (151 aa).

Residue histidine 56 is part of the active site.

This sequence belongs to the thioester dehydratase family. FabZ subfamily.

Its subcellular location is the cytoplasm. The catalysed reaction is a (3R)-hydroxyacyl-[ACP] = a (2E)-enoyl-[ACP] + H2O. Involved in unsaturated fatty acids biosynthesis. Catalyzes the dehydration of short chain beta-hydroxyacyl-ACPs and long chain saturated and unsaturated beta-hydroxyacyl-ACPs. The protein is 3-hydroxyacyl-[acyl-carrier-protein] dehydratase FabZ of Rhodopseudomonas palustris (strain BisB18).